A 97-amino-acid polypeptide reads, in one-letter code: UPF0729 protein GD16342 (97 aa).

The interval lysine 64–isoleucine 97 is disordered. Position 69 is a phosphoserine (serine 69).

It belongs to the UPF0729 family.

This Drosophila simulans (Fruit fly) protein is UPF0729 protein GD16342.